A 106-amino-acid polypeptide reads, in one-letter code: Small ribosomal subunit protein uS10 (106 aa).

This sequence belongs to the universal ribosomal protein uS10 family. Part of the 30S ribosomal subunit.

In terms of biological role, involved in the binding of tRNA to the ribosomes. The protein is Small ribosomal subunit protein uS10 of Prochlorococcus marinus (strain MIT 9303).